Consider the following 329-residue polypeptide: Biotin synthase (329 aa).

Residues 38–262 (NTIQVSTLLS…IMPYSYIRLS (225 aa)) form the Radical SAM core domain. [4Fe-4S] cluster is bound by residues C53, C57, and C60. [2Fe-2S] cluster-binding residues include C97, C128, C188, and R260.

This sequence belongs to the radical SAM superfamily. Biotin synthase family. In terms of assembly, homodimer. It depends on [4Fe-4S] cluster as a cofactor. Requires [2Fe-2S] cluster as cofactor.

The enzyme catalyses (4R,5S)-dethiobiotin + (sulfur carrier)-SH + 2 reduced [2Fe-2S]-[ferredoxin] + 2 S-adenosyl-L-methionine = (sulfur carrier)-H + biotin + 2 5'-deoxyadenosine + 2 L-methionine + 2 oxidized [2Fe-2S]-[ferredoxin]. It functions in the pathway cofactor biosynthesis; biotin biosynthesis; biotin from 7,8-diaminononanoate: step 2/2. Functionally, catalyzes the conversion of dethiobiotin (DTB) to biotin by the insertion of a sulfur atom into dethiobiotin via a radical-based mechanism. The chain is Biotin synthase from Acinetobacter baylyi (strain ATCC 33305 / BD413 / ADP1).